Here is a 159-residue protein sequence, read N- to C-terminus: Large ribosomal subunit protein uL15 (159 aa).

Residues 21-34 (LRPAPGAHKSKIRV) show a composition bias toward basic residues. A disordered region spans residues 21-55 (LRPAPGAHKSKIRVGRGEGSKGKTAGRGTKGSKAR).

This sequence belongs to the universal ribosomal protein uL15 family. In terms of assembly, part of the 50S ribosomal subunit.

Binds to the 23S rRNA. This Frankia casuarinae (strain DSM 45818 / CECT 9043 / HFP020203 / CcI3) protein is Large ribosomal subunit protein uL15.